The following is a 541-amino-acid chain: Chaperonin GroEL (541 aa).

Residues 29–32, 86–90, glycine 413, 476–478, and aspartate 492 each bind ATP; these read TLGP, DGTTT, and NAA.

This sequence belongs to the chaperonin (HSP60) family. In terms of assembly, forms a cylinder of 14 subunits composed of two heptameric rings stacked back-to-back. Interacts with the co-chaperonin GroES.

The protein localises to the cytoplasm. It catalyses the reaction ATP + H2O + a folded polypeptide = ADP + phosphate + an unfolded polypeptide.. Its function is as follows. Together with its co-chaperonin GroES, plays an essential role in assisting protein folding. The GroEL-GroES system forms a nano-cage that allows encapsulation of the non-native substrate proteins and provides a physical environment optimized to promote and accelerate protein folding. In Streptococcus equi subsp. zooepidemicus (strain H70), this protein is Chaperonin GroEL.